The primary structure comprises 434 residues: Eukaryotic translation initiation factor 3 subunit E (434 aa).

Residues 219 to 392 (FFNHPKGRDL…GHVVMGTQPL (174 aa)) enclose the PCI domain.

Belongs to the eIF-3 subunit E family. Component of the eukaryotic translation initiation factor 3 (eIF-3) complex. The eIF-3 complex interacts with pix. Interacts with mxt.

It localises to the cytoplasm. Its function is as follows. Component of the eukaryotic translation initiation factor 3 (eIF-3) complex, which is involved in protein synthesis of a specialized repertoire of mRNAs and, together with other initiation factors, stimulates binding of mRNA and methionyl-tRNAi to the 40S ribosome. The eIF-3 complex specifically targets and initiates translation of a subset of mRNAs involved in cell proliferation. In Drosophila persimilis (Fruit fly), this protein is Eukaryotic translation initiation factor 3 subunit E (eIF3-S6).